The sequence spans 130 residues: Mediator of RNA polymerase II transcription subunit 10 (130 aa).

It belongs to the Mediator complex subunit 10 family. As to quaternary structure, component of the Mediator complex.

The protein localises to the nucleus. In terms of biological role, component of the Mediator complex, a coactivator involved in the regulated transcription of nearly all RNA polymerase II-dependent genes. Mediator functions as a bridge to convey information from gene-specific regulatory proteins to the basal RNA polymerase II transcription machinery. Mediator is recruited to promoters by direct interactions with regulatory proteins and serves as a scaffold for the assembly of a functional preinitiation complex with RNA polymerase II and the general transcription factors. This Anopheles gambiae (African malaria mosquito) protein is Mediator of RNA polymerase II transcription subunit 10 (MED10).